Reading from the N-terminus, the 891-residue chain is Valine--tRNA ligase (891 aa).

Positions 43 to 53 (PFTSGTLHLGH) match the 'HIGH' region motif. The short motif at 536–540 (KMSKS) is the 'KMSKS' region element. Position 539 (lysine 539) interacts with ATP.

This sequence belongs to the class-I aminoacyl-tRNA synthetase family. ValS type 2 subfamily.

Its subcellular location is the cytoplasm. The catalysed reaction is tRNA(Val) + L-valine + ATP = L-valyl-tRNA(Val) + AMP + diphosphate. Catalyzes the attachment of valine to tRNA(Val). As ValRS can inadvertently accommodate and process structurally similar amino acids such as threonine, to avoid such errors, it has a 'posttransfer' editing activity that hydrolyzes mischarged Thr-tRNA(Val) in a tRNA-dependent manner. This chain is Valine--tRNA ligase, found in Pyrococcus abyssi (strain GE5 / Orsay).